Reading from the N-terminus, the 120-residue chain is Ribosome-binding factor A (120 aa).

The protein belongs to the RbfA family. As to quaternary structure, monomer. Binds 30S ribosomal subunits, but not 50S ribosomal subunits or 70S ribosomes.

It is found in the cytoplasm. Functionally, one of several proteins that assist in the late maturation steps of the functional core of the 30S ribosomal subunit. Associates with free 30S ribosomal subunits (but not with 30S subunits that are part of 70S ribosomes or polysomes). Required for efficient processing of 16S rRNA. May interact with the 5'-terminal helix region of 16S rRNA. The sequence is that of Ribosome-binding factor A from Chlorobaculum tepidum (strain ATCC 49652 / DSM 12025 / NBRC 103806 / TLS) (Chlorobium tepidum).